A 284-amino-acid polypeptide reads, in one-letter code: Non-selective voltage-gated ion channel VDAC3 (284 aa).

Residue Cys2 is modified to N-acetylcysteine. Residue Thr4 is modified to Phosphothreonine. Residues Lys12, Lys15, and Lys20 each carry the N6-acetyllysine modification. 2 beta stranded membrane-spanning segments follow: residues 26 to 35 and 39 to 48; these read MVKIDLKTKS and VMEFSTSGHA. Lys54 is covalently cross-linked (Glycyl lysine isopeptide (Lys-Gly) (interchain with G-Cter in ubiquitin)). Transmembrane regions (beta stranded) follow at residues 55–65, 70–77, and 81–90; these read ASGNLETKYKV, LTFTQKWN, and TLGTEISWEN. Lys91 carries the post-translational modification N6-acetyllysine. A beta stranded membrane pass occupies residues 96–105; the sequence is LKLTLDTIFV. Glycyl lysine isopeptide (Lys-Gly) (interchain with G-Cter in ubiquitin) cross-links involve residues Lys110 and Lys111. Beta stranded transmembrane passes span 112-121, 124-131, 138-146, 151-159, 164-176, 179-186, 190-199, 203-212, 219-228, and 232-239; these read SGKLKASYKR, FSVGSNVD, TIYGWAVLA, LAGYQMSFD, KLSQ…GYKA, FQLHTHVN, EFGGSIYQKV, IETSINLAWT, RFGIAAKYML, and TSLSAKVN. Phosphoserine is present on Ser242. Residues 243 to 245 and 261 to 265 each bind NAD(+); these read LIG and SALID. Beta stranded transmembrane passes span 243-252 and 255-264; these read LIGLGYTQTL and GVKLTLSALI. Position 267 is an N6-acetyllysine; alternate (Lys267). Lys267 participates in a covalent cross-link: Glycyl lysine isopeptide (Lys-Gly) (interchain with G-Cter in ubiquitin); alternate. A beta stranded membrane pass occupies residues 274–283; the sequence is HKVGLGFELE.

Belongs to the eukaryotic mitochondrial porin family. In terms of assembly, interacts with ARMC12 in a TBC1D21-dependent manner. Interacts with MISFA. Post-translationally, ubiquitinated by PRKN during mitophagy, leading to its degradation and enhancement of mitophagy. Deubiquitinated by USP30.

It localises to the mitochondrion outer membrane. The protein resides in the membrane. It carries out the reaction chloride(in) = chloride(out). The enzyme catalyses K(+)(in) = K(+)(out). Functionally, non-selective voltage-gated ion channel that mediates the transport of anions and cations through the mitochondrion outer membrane and plasma membrane. Forms a high-conducting channel with a stable open state and a voltage-induced closure with a mild preference for anions over cations. Involved in male fertility and sperm mitochondrial sheath formation. This chain is Non-selective voltage-gated ion channel VDAC3, found in Pongo abelii (Sumatran orangutan).